We begin with the raw amino-acid sequence, 213 residues long: MRSNYIVIEGLEGAGKTTARQLVVETLQSAGIHDMVFTREPGGTVLAEKLRSLVLDIQSTGDEVINDKAEVLMFYAARVQLVETVIKPALARGQWVIGDRHDLSTQAYQGGGRGIDRTMLATLRDAVLGDFRPNLTLYLDVTPEVGLQRARARGELDRIEQESMNFFNRTRARYLELAAADPSIRTVDATQPLDAVARDIRATIAQWMAEQPA.

Residue Gly-10 to Thr-17 participates in ATP binding.

Belongs to the thymidylate kinase family.

The catalysed reaction is dTMP + ATP = dTDP + ADP. In terms of biological role, phosphorylation of dTMP to form dTDP in both de novo and salvage pathways of dTTP synthesis. In Klebsiella pneumoniae (strain 342), this protein is Thymidylate kinase.